The chain runs to 259 residues: Protein IQ-DOMAIN 10 (259 aa).

Positions Lys18 to Ser39 are disordered. Positions Glu50–Arg77 constitute an IQ domain. Positions Arg61–Ser71 are calmodulin-binding. Residues Lys226–Gly259 are disordered.

Belongs to the IQD family. Binds to multiple calmodulin (CaM) in the presence of Ca(2+) and CaM-like proteins.

It localises to the nucleus. The protein resides in the cytoplasm. It is found in the cytoskeleton. Its function is as follows. May be involved in cooperative interactions with calmodulins or calmodulin-like proteins. Recruits calmodulin proteins to microtubules, thus being a potential scaffold in cellular signaling and trafficking. May associate with nucleic acids and regulate gene expression at the transcriptional or post-transcriptional level. This Arabidopsis thaliana (Mouse-ear cress) protein is Protein IQ-DOMAIN 10.